A 145-amino-acid polypeptide reads, in one-letter code: UPF0735 ACT domain-containing protein CPR_1404 (145 aa).

Positions 69–144 (IFNMVVTHEK…GVEKVEFVAM (76 aa)) constitute an ACT domain.

This sequence belongs to the UPF0735 family.

This is UPF0735 ACT domain-containing protein CPR_1404 from Clostridium perfringens (strain SM101 / Type A).